Consider the following 182-residue polypeptide: MLEETEAALLARVRELFGATLRQVEPLTGTWTNEDVHRLFLAPPSVFLAWMGCGEGRTRREVESRWAFFVVAELLNGEPVNRPGIYQIVERLIAGVNGQTFGPTTGMRLTQVRNLCDDNRINAGVVLYGVLFSGTTPLPSVVDLDSLDDYERHWQTWKFPDETPEFAAHINVNQEKDHDAEN.

The protein localises to the virion. It is found in the host cytoplasm. Functionally, may stop tail tube polymerization by capping the rapidly polymerizing tail tube once it has reached its requisite length and prevent its depolymerization. The sequence is that of Probable tail terminator protein from Enterobacteriaceae (Bacteriophage Mu).